We begin with the raw amino-acid sequence, 481 residues long: ATP synthase subunit beta, chloroplastic (481 aa).

162–169 (GGAGVGKT) contacts ATP.

Belongs to the ATPase alpha/beta chains family. As to quaternary structure, F-type ATPases have 2 components, CF(1) - the catalytic core - and CF(0) - the membrane proton channel. CF(1) has five subunits: alpha(3), beta(3), gamma(1), delta(1), epsilon(1). CF(0) has four main subunits: a(1), b(1), b'(1) and c(9-12).

It is found in the plastid. The protein resides in the chloroplast thylakoid membrane. It catalyses the reaction ATP + H2O + 4 H(+)(in) = ADP + phosphate + 5 H(+)(out). Produces ATP from ADP in the presence of a proton gradient across the membrane. The catalytic sites are hosted primarily by the beta subunits. This is ATP synthase subunit beta, chloroplastic from Chlorella vulgaris (Green alga).